Reading from the N-terminus, the 197-residue chain is Imidazoleglycerol-phosphate dehydratase (197 aa).

This sequence belongs to the imidazoleglycerol-phosphate dehydratase family.

The protein resides in the cytoplasm. The catalysed reaction is D-erythro-1-(imidazol-4-yl)glycerol 3-phosphate = 3-(imidazol-4-yl)-2-oxopropyl phosphate + H2O. It functions in the pathway amino-acid biosynthesis; L-histidine biosynthesis; L-histidine from 5-phospho-alpha-D-ribose 1-diphosphate: step 6/9. The chain is Imidazoleglycerol-phosphate dehydratase from Rhodopseudomonas palustris (strain BisA53).